The sequence spans 204 residues: phospholipase A2 inhibitor and Ly6/PLAUR domain-containing protein (204 aa).

The signal sequence occupies residues 1–26 (MRLSRRPETFLLAFVLLCTLLGLGCP). A UPAR/Ly6 domain is found at 27-117 (LHCEICTAAG…NSAFLSVPLT (91 aa)). Cystine bridges form between Cys29-Cys53, Cys32-Cys39, Cys46-Cys74, Cys80-Cys101, Cys102-Cys107, Cys126-Cys151, and Cys144-Cys172.

The protein belongs to the CNF-like-inhibitor family.

It is found in the secreted. This chain is phospholipase A2 inhibitor and Ly6/PLAUR domain-containing protein (PINLYP), found in Homo sapiens (Human).